A 156-amino-acid polypeptide reads, in one-letter code: Endogenous retrovirus group K member 104 Pro protein (156 aa).

One can recognise a Peptidase A2 domain in the interval 21 to 96; it reads FEGLVDTEAD…IPLNLWGQDL (76 aa). Aspartate 26 is a catalytic residue. Residues 111 to 156 enclose the G-patch domain; that stretch reads YSPTSQKIMTKMGYIPGKGLGKNEDGIKVPVEAKINQKREGIGYPF.

It belongs to the peptidase A2 family. HERV class-II K(HML-2) subfamily. As to quaternary structure, active as a homodimer. In terms of processing, autoproteolytically processed at the N-terminus. Expected C-terminal autoprocessing not detected. The sequence shown is that of the processed Pro protein.

It catalyses the reaction Processing at the authentic HIV-1 PR recognition site and release of the mature p17 matrix and the p24 capsid protein, as a result of the cleavage of the -SQNY-|-PIVQ- cleavage site.. Retroviral proteases have roles in the processing of the primary translation products and the maturation of the viral particle. Endogenous Pro proteins may have kept, lost or modified their original function during evolution. The chain is Endogenous retrovirus group K member 104 Pro protein (HERV-K104) from Homo sapiens (Human).